The chain runs to 51 residues: Large ribosomal subunit protein eL39y (51 aa).

The tract at residues 1–21 (MPSHKSFMIKKKLGKKMRQNR) is disordered. Residues 7-19 (FMIKKKLGKKMRQ) show a composition bias toward basic residues.

Belongs to the eukaryotic ribosomal protein eL39 family.

This is Large ribosomal subunit protein eL39y (RPL39B) from Arabidopsis thaliana (Mouse-ear cress).